The following is a 921-amino-acid chain: Protein translocase subunit SecA (921 aa).

ATP is bound by residues Gln-87, 105-109 (GEGKT), and Asp-515. The tract at residues 575 to 594 (RRIDNQLRGRSGRQGDPGSS) is disordered. Zn(2+)-binding residues include Cys-905, Cys-907, Cys-916, and Cys-917.

Belongs to the SecA family. In terms of assembly, monomer and homodimer. Part of the essential Sec protein translocation apparatus which comprises SecA, SecYEG and auxiliary proteins SecDF-YajC and YidC. Requires Zn(2+) as cofactor.

It localises to the cell inner membrane. Its subcellular location is the cytoplasm. The catalysed reaction is ATP + H2O + cellular proteinSide 1 = ADP + phosphate + cellular proteinSide 2.. In terms of biological role, part of the Sec protein translocase complex. Interacts with the SecYEG preprotein conducting channel. Has a central role in coupling the hydrolysis of ATP to the transfer of proteins into and across the cell membrane, serving both as a receptor for the preprotein-SecB complex and as an ATP-driven molecular motor driving the stepwise translocation of polypeptide chains across the membrane. This is Protein translocase subunit SecA from Polynucleobacter necessarius subsp. necessarius (strain STIR1).